Consider the following 491-residue polypeptide: Delayed-rectifier potassium channel regulatory subunit KCNS3 (491 aa).

Over 1–182 (MVFGEFFHRP…IRMENPAYCL (182 aa)) the chain is Cytoplasmic. A helical membrane pass occupies residues 183-204 (SAKLIAISSLSVVLASIVAMCV). Residues 205-220 (HSMSEFQNEDGEVDDP) lie on the Extracellular side of the membrane. The chain crosses the membrane as a helical span at residues 221-243 (VLEGVEIACIAWFTGELAIRLVA). Over 244–254 (APSQKKFWKNP) the chain is Cytoplasmic. Residues 255-275 (LNIIDFVSIIPFYATLAVDTK) traverse the membrane as a helical segment. Over 276 to 285 (EEESEDIENM) the chain is Extracellular. Residues 286–306 (GKVVQILRLMRIFRILKLARH) form a helical; Voltage-sensor membrane-spanning segment. Topologically, residues 307-321 (SVGLRSLGATLRHSY) are cytoplasmic. A helical transmembrane segment spans residues 322–343 (HEVGLLLLFLSVGISIFSVLIY). The Extracellular segment spans residues 344–357 (SVEKDEHKSSLTSI). Positions 358 to 369 (PICWWWATISMT) form an intramembrane region, helical. The short motif at 370 to 375 (TVGYGD) is the Selectivity filter element. An intramembrane segment occupies 370–377 (TVGYGDTH). At 378 to 384 (PVTLAGK) the chain is on the extracellular side. A helical membrane pass occupies residues 385–413 (IIASTCIICGILVVALPITIIFNKFSKYY). Residues 414–491 (QKQKDMEVDQ…TASLENCTGK (78 aa)) lie on the Cytoplasmic side of the membrane.

It belongs to the potassium channel family. S (TC 1.A.1.2) subfamily. Kv9.3/KCNS3 sub-subfamily. In terms of assembly, heterotetramer with KCNB1. Does not form homomultimers.

It is found in the cell membrane. Functionally, potassium channel regulatory subunit that modulates the delayed rectifier potassium channel activity of KCNB1 by namely slowing down the deactivation and inactivation time constants. While it does not form functional channel on its own, it can form functional heterotetrameric channels with KCNB1. The protein is Delayed-rectifier potassium channel regulatory subunit KCNS3 of Mus musculus (Mouse).